We begin with the raw amino-acid sequence, 344 residues long: Late embryogenesis abundant protein 17 (344 aa).

Disordered stretches follow at residues 1-20 and 116-258; these read MASR…RRAA and KDYT…QGQG. A coiled-coil region spans residues 3-52; sequence SRQDRREARAEADARRAAEEIARARDERVMQAEVDARSAADEIARARADR. Composition is skewed to basic and acidic residues over residues 116–163, 172–230, and 238–252; these read KDYT…KDAV, EATK…DATK, and DKAR…DATD.

Belongs to the LEA type 4 family. Expressed in embryos.

Its subcellular location is the nucleus. Its function is as follows. Involved in abiotic stress responses. May function as chaperone and contribute to prevent the formation of damaging protein aggregates. In Oryza sativa subsp. japonica (Rice), this protein is Late embryogenesis abundant protein 17.